Here is a 523-residue protein sequence, read N- to C-terminus: (R)-citramalate synthase (523 aa).

A Pyruvate carboxyltransferase domain is found at 6 to 272; it reads VEVLDTTLRD…KGNESLKKLK (267 aa).

Belongs to the alpha-IPM synthase/homocitrate synthase family.

It catalyses the reaction pyruvate + acetyl-CoA + H2O = (3R)-citramalate + CoA + H(+). It functions in the pathway amino-acid biosynthesis; L-isoleucine biosynthesis; 2-oxobutanoate from pyruvate: step 1/3. Inhibited by isoleucine. Functionally, catalyzes the condensation of pyruvate and acetyl-coenzyme A to form (R)-citramalate. Makes part of a pathway for isoleucine biosynthesis, i.e. the citramalate-dependent pathway. Also displays a low alpha-isopropylmalate synthase activity, using 2-oxoisovalerate as substrate, but is unable to use 2-oxoglutarate. The protein is (R)-citramalate synthase of Sulfolobus acidocaldarius (strain ATCC 33909 / DSM 639 / JCM 8929 / NBRC 15157 / NCIMB 11770).